A 53-amino-acid chain; its full sequence is Rubredoxin (53 aa).

Residues 1–53 (MTKYVCTVCGYVYDPEVGDPDNNINPGTSFQDIPEDWVCPLCGVGKDQFEEEA) enclose the Rubredoxin-like domain. C6, C9, C39, and C42 together coordinate Fe cation.

It belongs to the rubredoxin family. The cofactor is Fe(3+).

In terms of biological role, rubredoxin is a small nonheme, iron protein lacking acid-labile sulfide. Its single Fe, chelated to 4 Cys, functions as an electron acceptor and may also stabilize the conformation of the molecule. This Acetoanaerobium sticklandii (strain ATCC 12662 / DSM 519 / JCM 1433 / CCUG 9281 / NCIMB 10654 / HF) (Clostridium sticklandii) protein is Rubredoxin.